The chain runs to 237 residues: Ribonuclease PH (237 aa).

Phosphate contacts are provided by residues R86 and 124–126; that span reads GTR.

It belongs to the RNase PH family. In terms of assembly, homohexameric ring arranged as a trimer of dimers.

It carries out the reaction tRNA(n+1) + phosphate = tRNA(n) + a ribonucleoside 5'-diphosphate. Phosphorolytic 3'-5' exoribonuclease that plays an important role in tRNA 3'-end maturation. Removes nucleotide residues following the 3'-CCA terminus of tRNAs; can also add nucleotides to the ends of RNA molecules by using nucleoside diphosphates as substrates, but this may not be physiologically important. Probably plays a role in initiation of 16S rRNA degradation (leading to ribosome degradation) during starvation. This is Ribonuclease PH from Shewanella piezotolerans (strain WP3 / JCM 13877).